The sequence spans 521 residues: Phomenoic acid biosynthesis cluster-specific transcriptional regulator (521 aa).

A DNA-binding region (zn(2)-C6 fungal-type) is located at residues 46-76 (HCWQCRRSCVVCDFTQPGCQRCSAAGVSCPG).

The protein resides in the nucleus. Functionally, transcriptional regulator; part of the gene cluster that mediates the biosynthesis of phomenoic acid, a long chain aliphatic carboxylic acid that does not appear to be essential for pathogenicity but may play a role in allowing to outcompete other fungi in the environmental niche via its antifungal properties. Positively regulates the expression of the cluster and subsequent production of phomenoic acid. This Leptosphaeria maculans (strain JN3 / isolate v23.1.3 / race Av1-4-5-6-7-8) (Blackleg fungus) protein is Phomenoic acid biosynthesis cluster-specific transcriptional regulator.